Consider the following 439-residue polypeptide: GTPase Der (439 aa).

2 consecutive EngA-type G domains span residues 2–166 (SVVA…PAPA) and 176–351 (TRLA…IEFN). GTP-binding positions include 8 to 15 (GRPNVGKS), 55 to 59 (DTGGF), 118 to 121 (NKVD), 182 to 189 (GRPNVGKS), 229 to 233 (DTAGI), and 294 to 297 (NKWD). A KH-like domain is found at 352–436 (RQVPTGVLNR…PIRLKFKDRN (85 aa)).

This sequence belongs to the TRAFAC class TrmE-Era-EngA-EngB-Septin-like GTPase superfamily. EngA (Der) GTPase family. In terms of assembly, associates with the 50S ribosomal subunit.

In terms of biological role, GTPase that plays an essential role in the late steps of ribosome biogenesis. This Syntrophotalea carbinolica (strain DSM 2380 / NBRC 103641 / GraBd1) (Pelobacter carbinolicus) protein is GTPase Der.